Here is an 811-residue protein sequence, read N- to C-terminus: Ribosome biogenesis protein ERB1 (811 aa).

A compositionally biased stretch (polar residues) spans 1–11 (MARNSKATDTP). Residues 1-138 (MARNSKATDT…VHTKFSDGRP (138 aa)) are disordered. Residues 27–96 (EDAEESSSDE…LSDVDSEEFS (70 aa)) show a composition bias toward acidic residues. Residues 104 to 121 (ASITDKLSGTKIRSYSNA) are compositionally biased toward polar residues. The segment covering 128–138 (EVHTKFSDGRP) has biased composition (basic and acidic residues). A required for interaction with NOP7 region spans residues 270 to 386 (RFVPSKHEAK…LRKVPGYQEG (117 aa)). Residues 386-422 (GLRERFERCLDLYLAPRTRHNKLNIDPDSLIPELPSP) are required for interaction with YTM1. WD repeat units lie at residues 438–477 (GHTE…QVYK) and 485–525 (NTDD…FDIE). Positions 547 to 566 (TKNSNIKVNSDDEDEEVEKA) are disordered. WD repeat units follow at residues 595-637 (QCRK…SQSP), 640-678 (KSKG…LVKK), 681-720 (PGAR…TPYK), 724-764 (YHDK…DLMT), and 780-811 (INSL…LWTT).

It belongs to the WD repeat BOP1/ERB1 family. Component of the NOP7 complex, composed of ERB1, NOP7 and YTM1. The complex is held together by ERB1, which interacts with NOP7 via its N-terminal domain and with YTM1 via a high-affinity interaction between the seven-bladed beta-propeller domains of the 2 proteins. The NOP7 complex associates with the 66S pre-ribosome.

It localises to the nucleus. The protein localises to the nucleolus. It is found in the nucleoplasm. In terms of biological role, component of the NOP7 complex, which is required for maturation of the 25S and 5.8S ribosomal RNAs and formation of the 60S ribosome. The polypeptide is Ribosome biogenesis protein ERB1 (Debaryomyces hansenii (strain ATCC 36239 / CBS 767 / BCRC 21394 / JCM 1990 / NBRC 0083 / IGC 2968) (Yeast)).